The following is a 319-amino-acid chain: uncharacterized protein (319 aa).

Residues 281 to 319 form a disordered region; sequence KVERKQRRRDDQNIMRSKLPQQRQNPFCSTERPKRARCD. Residues 299 to 308 show a composition bias toward polar residues; that stretch reads LPQQRQNPFC.

The protein localises to the cytoplasm. It is found in the nucleus. This is an uncharacterized protein from Saccharomyces cerevisiae (strain ATCC 204508 / S288c) (Baker's yeast).